A 213-amino-acid chain; its full sequence is tRNA (guanine-N(7)-)-methyltransferase (213 aa).

Residues glutamate 44, aspartate 69, aspartate 96, and aspartate 118 each contribute to the S-adenosyl-L-methionine site. Residue aspartate 118 is part of the active site. Lysine 122 contacts substrate. Residues arginine 124–arginine 129 are interaction with RNA. Substrate is bound by residues aspartate 154 and threonine 191–glutamate 194.

This sequence belongs to the class I-like SAM-binding methyltransferase superfamily. TrmB family.

It carries out the reaction guanosine(46) in tRNA + S-adenosyl-L-methionine = N(7)-methylguanosine(46) in tRNA + S-adenosyl-L-homocysteine. The protein operates within tRNA modification; N(7)-methylguanine-tRNA biosynthesis. Its function is as follows. Catalyzes the formation of N(7)-methylguanine at position 46 (m7G46) in tRNA. The chain is tRNA (guanine-N(7)-)-methyltransferase from Streptococcus thermophilus (strain CNRZ 1066).